A 262-amino-acid polypeptide reads, in one-letter code: Acyl-[acyl-carrier-protein]--UDP-N-acetylglucosamine O-acyltransferase (262 aa).

The protein belongs to the transferase hexapeptide repeat family. LpxA subfamily. In terms of assembly, homotrimer.

It is found in the cytoplasm. The enzyme catalyses a (3R)-hydroxyacyl-[ACP] + UDP-N-acetyl-alpha-D-glucosamine = a UDP-3-O-[(3R)-3-hydroxyacyl]-N-acetyl-alpha-D-glucosamine + holo-[ACP]. Its pathway is glycolipid biosynthesis; lipid IV(A) biosynthesis; lipid IV(A) from (3R)-3-hydroxytetradecanoyl-[acyl-carrier-protein] and UDP-N-acetyl-alpha-D-glucosamine: step 1/6. Functionally, involved in the biosynthesis of lipid A, a phosphorylated glycolipid that anchors the lipopolysaccharide to the outer membrane of the cell. This chain is Acyl-[acyl-carrier-protein]--UDP-N-acetylglucosamine O-acyltransferase, found in Cronobacter sakazakii (strain ATCC BAA-894) (Enterobacter sakazakii).